We begin with the raw amino-acid sequence, 54 residues long: Lectin alpha chain (54 aa).

The protein belongs to the leguminous lectin family. Tetramer of two alpha and two beta chains.

The polypeptide is Lectin alpha chain (Lathyrus odoratus (Sweet pea)).